We begin with the raw amino-acid sequence, 414 residues long: S-adenosylmethionine synthase (414 aa).

Residue His-11 coordinates ATP. Residue Asp-13 participates in Mg(2+) binding. Glu-39 is a binding site for K(+). Positions 52 and 95 each coordinate L-methionine. The tract at residues 95–105 (QSPDIAQGVNM) is flexible loop. Residues 169–171 (DGK), 245–246 (KF), Asp-254, 260–261 (RK), Ala-277, and Lys-281 contribute to the ATP site. Asp-254 provides a ligand contact to L-methionine. Residue Lys-285 participates in L-methionine binding.

The protein belongs to the AdoMet synthase family. In terms of assembly, homotetramer; dimer of dimers. The cofactor is Mg(2+). K(+) serves as cofactor.

The protein resides in the cytoplasm. The catalysed reaction is L-methionine + ATP + H2O = S-adenosyl-L-methionine + phosphate + diphosphate. It functions in the pathway amino-acid biosynthesis; S-adenosyl-L-methionine biosynthesis; S-adenosyl-L-methionine from L-methionine: step 1/1. Functionally, catalyzes the formation of S-adenosylmethionine (AdoMet) from methionine and ATP. The overall synthetic reaction is composed of two sequential steps, AdoMet formation and the subsequent tripolyphosphate hydrolysis which occurs prior to release of AdoMet from the enzyme. This is S-adenosylmethionine synthase from Synechococcus sp. (strain JA-2-3B'a(2-13)) (Cyanobacteria bacterium Yellowstone B-Prime).